The following is a 636-amino-acid chain: MIVTLPLPPAIANWWPEAVTSFLQWFAFWSFSILLTVPWLFCIYQLVTNHLGRTKRIKRVLDDYTAPKVVVVMPCYREEPDVLISAIDSVVQCDYPAPCIHVFLSFDGEQVDELYLNTLGLLGVPTTLDSYPNCIDVIYKGVRITVSRFSHGGKRQCQKSTFELIDRVYADYIKQNDNIFILFIDSDCILDRVCLQNFVYDMELSPGNSRKMLAMTGVITSTTKKHSIITLLQDMEYIHGQLFERTVESGCGSVTCLPGALTMLRFSAFRRMAKYYFADKAEECDDLFDYAKCHLGEDRWLTHLFMIGAKQRYQIQMCTSAFCKTEAVQTYASLVKQRRRWFLGFITNEVCMLTDWRLWKRYPALILVRFMQNTIRTTALLFFVMVLALLTTTASVRNLPVGFMAVSLGLNWLLMLYFGAKLKRFKIWFYPLMFVLNPLFNWYYMVYGILTAGQRTWGGPRADAAAADIHTTAREAAEQAERQGDELNIVPETFKPAKEARTIVHQNQGPGIPIVRKRSVVRPPDVVDGQFSGPRNIKGVPYASRRHLQHAEPISEQANPWPAYDADGILARGGEGDAYMSDEDKRKYAIAHQAQRLRLEQRPRTGPSLNARWQNGPQASETSQGRSQVDDVGIAF.

Helical transmembrane passes span 23–43, 374–394, 399–419, and 427–447; these read LQWF…LFCI, TIRT…TTTA, LPVG…LYFG, and IWFY…YMVY. The disordered stretch occupies residues 595 to 636; it reads QRLRLEQRPRTGPSLNARWQNGPQASETSQGRSQVDDVGIAF. The segment covering 607-627 has biased composition (polar residues); the sequence is PSLNARWQNGPQASETSQGRS.

Belongs to the chitin synthase family. Class VI subfamily. In terms of tissue distribution, moderately expressed during appressorium formation.

The protein localises to the cell membrane. It catalyses the reaction [(1-&gt;4)-N-acetyl-beta-D-glucosaminyl](n) + UDP-N-acetyl-alpha-D-glucosamine = [(1-&gt;4)-N-acetyl-beta-D-glucosaminyl](n+1) + UDP + H(+). Polymerizes chitin, a structural polymer of the cell wall and septum, by transferring the sugar moiety of UDP-GlcNAc to the non-reducing end of the growing chitin polymer. Contributes to the production of conidia but is the only chitine synthase that does not contribute to the ability of fungal conidia to germinate. Involved in fungal stress tolerances. This Metarhizium acridum (strain CQMa 102) protein is Chitin synthase VI.